A 551-amino-acid polypeptide reads, in one-letter code: L-lactate permease (551 aa).

The next 12 membrane-spanning stretches (helical) occupy residues asparagine 13 to isoleucine 33, leucine 37 to phenylalanine 57, valine 69 to phenylalanine 89, glycine 131 to phenylalanine 151, leucine 159 to valine 179, methionine 194 to methionine 214, phenylalanine 244 to leucine 264, phenylalanine 306 to alanine 326, phenylalanine 366 to tryptophan 386, leucine 405 to serine 425, threonine 438 to glycine 458, and isoleucine 530 to isoleucine 550.

The protein belongs to the lactate permease family.

The protein localises to the cell inner membrane. It catalyses the reaction (S)-lactate(in) + H(+)(in) = (S)-lactate(out) + H(+)(out). The catalysed reaction is (R)-lactate(in) + H(+)(in) = (R)-lactate(out) + H(+)(out). The enzyme catalyses glycolate(in) + H(+)(in) = glycolate(out) + H(+)(out). In terms of biological role, uptake of L-lactate across the membrane. Can also transport D-lactate and glycolate. Seems to be driven by a proton motive force. The protein is L-lactate permease (lldP) of Salmonella typhimurium (strain LT2 / SGSC1412 / ATCC 700720).